We begin with the raw amino-acid sequence, 372 residues long: Spermidine/putrescine import ATP-binding protein PotA (372 aa).

An ABC transporter domain is found at 13–243 (IKLTGISKSF…PKNLFVARFI (231 aa)). 45 to 52 (GPSGCGKT) contacts ATP.

It belongs to the ABC transporter superfamily. Spermidine/putrescine importer (TC 3.A.1.11.1) family. As to quaternary structure, the complex is composed of two ATP-binding proteins (PotA), two transmembrane proteins (PotB and PotC) and a solute-binding protein (PotD).

The protein localises to the cell inner membrane. The catalysed reaction is ATP + H2O + polyamine-[polyamine-binding protein]Side 1 = ADP + phosphate + polyamineSide 2 + [polyamine-binding protein]Side 1.. In terms of biological role, part of the ABC transporter complex PotABCD involved in spermidine/putrescine import. Responsible for energy coupling to the transport system. In Aliivibrio fischeri (strain ATCC 700601 / ES114) (Vibrio fischeri), this protein is Spermidine/putrescine import ATP-binding protein PotA.